We begin with the raw amino-acid sequence, 151 residues long: MAGKRFWILLSAAGLLLLDQLSKQWWLQNLPPGVSQSWIPGLLNLRLVWNDGAAFSLFRSGSQWLGWISLLVSVGLLIWIGRRGRQWSRWQAAAAAFLLAGSVGNGIDRWRYGAVIDGLELVPFSFPVFNLADVAINLAVLCLLIEAIRQR.

2 helical membrane passes run 61-81 (GSQW…IWIG) and 88-107 (SRWQ…GNGI). Active-site residues include aspartate 117 and aspartate 133. Residues 128 to 148 (VFNLADVAINLAVLCLLIEAI) form a helical membrane-spanning segment.

This sequence belongs to the peptidase A8 family.

It is found in the cell inner membrane. It catalyses the reaction Release of signal peptides from bacterial membrane prolipoproteins. Hydrolyzes -Xaa-Yaa-Zaa-|-(S,diacylglyceryl)Cys-, in which Xaa is hydrophobic (preferably Leu), and Yaa (Ala or Ser) and Zaa (Gly or Ala) have small, neutral side chains.. Its pathway is protein modification; lipoprotein biosynthesis (signal peptide cleavage). Its function is as follows. This protein specifically catalyzes the removal of signal peptides from prolipoproteins. The sequence is that of Lipoprotein signal peptidase from Synechococcus sp. (strain RCC307).